Consider the following 334-residue polypeptide: Chitinase 9 (334 aa).

The first 23 residues, 1 to 23, serve as a signal peptide directing secretion; that stretch reads MKATTTAVALLVAAAAMAAQVVA. Residues 24 to 64 form the Chitin-binding type-1 domain; sequence EQCGSQAGGALCPNCLCCSSYGWCGSTSDYCGDGCQSQCDG. 8 disulfide bridges follow: Cys26-Cys41, Cys35-Cys47, Cys38-Cys65, Cys40-Cys54, Cys58-Cys62, Cys107-Cys169, Cys181-Cys189, and Cys288-Cys320. Residue Glu151 is the Proton donor of the active site.

The protein belongs to the glycosyl hydrolase 19 family. Chitinase class I subfamily. Expressed at high levels in roots, sheaths and meristems.

The enzyme catalyses Random endo-hydrolysis of N-acetyl-beta-D-glucosaminide (1-&gt;4)-beta-linkages in chitin and chitodextrins.. Its function is as follows. May play a role in defense against fungal pathogens containing chitin. This chain is Chitinase 9 (Cht9), found in Oryza sativa subsp. japonica (Rice).